A 219-amino-acid chain; its full sequence is 7-cyano-7-deazaguanine synthase (219 aa).

10 to 20 (FSGGQDSTTCL) contacts ATP. Zn(2+) is bound by residues C188, C197, C200, and C203.

Belongs to the QueC family. As to quaternary structure, homodimer. It depends on Zn(2+) as a cofactor.

The enzyme catalyses 7-carboxy-7-deazaguanine + NH4(+) + ATP = 7-cyano-7-deazaguanine + ADP + phosphate + H2O + H(+). It functions in the pathway purine metabolism; 7-cyano-7-deazaguanine biosynthesis. In terms of biological role, catalyzes the ATP-dependent conversion of 7-carboxy-7-deazaguanine (CDG) to 7-cyano-7-deazaguanine (preQ(0)). This is 7-cyano-7-deazaguanine synthase from Clostridium botulinum (strain ATCC 19397 / Type A).